The sequence spans 148 residues: Large ribosomal subunit protein bL9 (148 aa).

Belongs to the bacterial ribosomal protein bL9 family.

Its function is as follows. Binds to the 23S rRNA. This chain is Large ribosomal subunit protein bL9, found in Coprothermobacter proteolyticus (strain ATCC 35245 / DSM 5265 / OCM 4 / BT).